The following is a 228-amino-acid chain: MKKNHLVKYLLISPSLPVGGFCYSEGLESYLKIKNLEEPDHIRNLITNELKIGQIRIEAKCLIEFFDIFVELKIANNINKNRRRLLSLDKWLLSFRDTVEIRDQQTQMAKSLFELTKEFGFEYLYEKNKNISWSLAWSWACFSFQINKLEMIENFIYAWTANQLSAAIRLIPMGSIKAQTIQLELLDLISEVSQEIVDSNINDLYVGNISLSMAQQNHNDLYTKLFRN.

The protein belongs to the UreF family. In terms of assembly, ureD, UreF and UreG form a complex that acts as a GTP-hydrolysis-dependent molecular chaperone, activating the urease apoprotein by helping to assemble the nickel containing metallocenter of UreC. The UreE protein probably delivers the nickel.

It is found in the cytoplasm. Its function is as follows. Required for maturation of urease via the functional incorporation of the urease nickel metallocenter. The sequence is that of Urease accessory protein UreF from Prochlorococcus marinus subsp. pastoris (strain CCMP1986 / NIES-2087 / MED4).